Consider the following 314-residue polypeptide: Methionyl-tRNA formyltransferase (314 aa).

113 to 116 contributes to the (6S)-5,6,7,8-tetrahydrofolate binding site; sequence SLLP.

This sequence belongs to the Fmt family.

The catalysed reaction is L-methionyl-tRNA(fMet) + (6R)-10-formyltetrahydrofolate = N-formyl-L-methionyl-tRNA(fMet) + (6S)-5,6,7,8-tetrahydrofolate + H(+). Its function is as follows. Attaches a formyl group to the free amino group of methionyl-tRNA(fMet). The formyl group appears to play a dual role in the initiator identity of N-formylmethionyl-tRNA by promoting its recognition by IF2 and preventing the misappropriation of this tRNA by the elongation apparatus. The protein is Methionyl-tRNA formyltransferase of Pseudomonas aeruginosa (strain UCBPP-PA14).